The sequence spans 389 residues: Succinate--CoA ligase [ADP-forming] subunit beta (389 aa).

In terms of domain architecture, ATP-grasp spans 9-246 (KEILRRHNAN…ITEEDPYEVK (238 aa)). ATP-binding positions include Lys48, 55 to 57 (GRG), Glu101, Leu104, and Glu109. Asn201 and Asp215 together coordinate Mg(2+). Substrate contacts are provided by residues Asn266 and 323–325 (GIV).

Belongs to the succinate/malate CoA ligase beta subunit family. Heterotetramer of two alpha and two beta subunits. It depends on Mg(2+) as a cofactor.

The catalysed reaction is succinate + ATP + CoA = succinyl-CoA + ADP + phosphate. It carries out the reaction GTP + succinate + CoA = succinyl-CoA + GDP + phosphate. The protein operates within carbohydrate metabolism; tricarboxylic acid cycle; succinate from succinyl-CoA (ligase route): step 1/1. In terms of biological role, succinyl-CoA synthetase functions in the citric acid cycle (TCA), coupling the hydrolysis of succinyl-CoA to the synthesis of either ATP or GTP and thus represents the only step of substrate-level phosphorylation in the TCA. The beta subunit provides nucleotide specificity of the enzyme and binds the substrate succinate, while the binding sites for coenzyme A and phosphate are found in the alpha subunit. This chain is Succinate--CoA ligase [ADP-forming] subunit beta, found in Leptospira biflexa serovar Patoc (strain Patoc 1 / Ames).